Consider the following 285-residue polypeptide: Bifunctional protein FolD (285 aa).

Residues 166 to 168 (GAS) and isoleucine 232 each bind NADP(+).

It belongs to the tetrahydrofolate dehydrogenase/cyclohydrolase family. In terms of assembly, homodimer.

It carries out the reaction (6R)-5,10-methylene-5,6,7,8-tetrahydrofolate + NADP(+) = (6R)-5,10-methenyltetrahydrofolate + NADPH. It catalyses the reaction (6R)-5,10-methenyltetrahydrofolate + H2O = (6R)-10-formyltetrahydrofolate + H(+). It functions in the pathway one-carbon metabolism; tetrahydrofolate interconversion. The NAD(+)-dependent dehydrogenase is activated by inorganic phosphate. Its function is as follows. Catalyzes the oxidation of 5,10-methylenetetrahydrofolate to 5,10-methenyltetrahydrofolate and then the hydrolysis of 5,10-methenyltetrahydrofolate to 10-formyltetrahydrofolate. The protein is Bifunctional protein FolD of Photobacterium phosphoreum.